The following is a 102-amino-acid chain: UPF0235 protein Noc_3000 (102 aa).

It belongs to the UPF0235 family.

The sequence is that of UPF0235 protein Noc_3000 from Nitrosococcus oceani (strain ATCC 19707 / BCRC 17464 / JCM 30415 / NCIMB 11848 / C-107).